Reading from the N-terminus, the 190-residue chain is Elongation factor P 2 (190 aa).

It belongs to the elongation factor P family.

It is found in the cytoplasm. It functions in the pathway protein biosynthesis; polypeptide chain elongation. Involved in peptide bond synthesis. Stimulates efficient translation and peptide-bond synthesis on native or reconstituted 70S ribosomes in vitro. Probably functions indirectly by altering the affinity of the ribosome for aminoacyl-tRNA, thus increasing their reactivity as acceptors for peptidyl transferase. This Chlamydia pneumoniae (Chlamydophila pneumoniae) protein is Elongation factor P 2 (efp2).